The following is a 329-amino-acid chain: Beta-ketoacyl-[acyl-carrier-protein] synthase III (329 aa).

Active-site residues include cysteine 114 and histidine 255. Residues 256 to 260 (QANQR) are ACP-binding. Residue asparagine 285 is part of the active site.

The protein belongs to the thiolase-like superfamily. FabH family. As to quaternary structure, homodimer.

The protein resides in the cytoplasm. The enzyme catalyses malonyl-[ACP] + acetyl-CoA + H(+) = 3-oxobutanoyl-[ACP] + CO2 + CoA. It functions in the pathway lipid metabolism; fatty acid biosynthesis. In terms of biological role, catalyzes the condensation reaction of fatty acid synthesis by the addition to an acyl acceptor of two carbons from malonyl-ACP. Catalyzes the first condensation reaction which initiates fatty acid synthesis and may therefore play a role in governing the total rate of fatty acid production. Possesses both acetoacetyl-ACP synthase and acetyl transacylase activities. Its substrate specificity determines the biosynthesis of branched-chain and/or straight-chain of fatty acids. The protein is Beta-ketoacyl-[acyl-carrier-protein] synthase III of Trichodesmium erythraeum (strain IMS101).